We begin with the raw amino-acid sequence, 388 residues long: Isocitrate dehydrogenase [NAD] subunit 1, mitochondrial (388 aa).

The transit peptide at 1-35 directs the protein to the mitochondrion; it reads MFSLRTAQPAQSLFRAATNTYSTSLPRSAIAARSF. The substrate site is built by arginine 137, arginine 168, and aspartate 255. Aspartate 255 lines the Mg(2+) pocket.

The protein belongs to the isocitrate and isopropylmalate dehydrogenases family. As to quaternary structure, octamer of two non-identical subunits IDH1 and IDH2. The cofactor is Mg(2+). It depends on Mn(2+) as a cofactor.

The protein localises to the mitochondrion. It carries out the reaction D-threo-isocitrate + NAD(+) = 2-oxoglutarate + CO2 + NADH. In terms of biological role, performs an essential role in the oxidative function of the citric acid cycle. The sequence is that of Isocitrate dehydrogenase [NAD] subunit 1, mitochondrial (IDH1) from Ajellomyces capsulatus (Darling's disease fungus).